The following is a 72-amino-acid chain: UPF0270 protein KPK_0377 (72 aa).

Belongs to the UPF0270 family.

This chain is UPF0270 protein KPK_0377, found in Klebsiella pneumoniae (strain 342).